We begin with the raw amino-acid sequence, 349 residues long: MASCGEVDHSVSSLPSSKKGSGDSACSGSSGSSPALPVPECAICLQSCVHPVQLPCRHVFCFLCVKGASWQSKRCALCRQEVPEDFLEHPTLLSPEELKTGGRGATGDNAWYYEGRNGWWQYDERTSRELEDAFSKGKKTAEMLIAGFLYVADLENMVQYRRNEHGRRRKIKRDVVDIPKKGVAGLRLDTEGGVQGSAAAGRGNSADGADTSAAAVQQAAAAPAATTVLSAPARPPTSLGGQPGSPTSPSLEDTLALLHISPTDAPERAEVGEGEEEATATPSMSSSPNTYADGSGDWSDDEGDGEAVEPREQRLRLGESLVDRSPPGAEASSSSSVRSRRPDGQCTEV.

The segment at 1–21 is disordered; it reads MASCGEVDHSVSSLPSSKKGS. Residues 10 to 21 are compositionally biased toward low complexity; it reads SVSSLPSSKKGS. The RING-type zinc finger occupies 41 to 79; it reads CAICLQSCVHPVQLPCRHVFCFLCVKGASWQSKRCALCR. In terms of domain architecture, WWE spans 97–173; sequence ELKTGGRGAT…EHGRRRKIKR (77 aa). Residues Tyr113, Arg116, Trp120, Tyr150, Gln159, Arg169, and Lys181 each contribute to the a glycoprotein site. Disordered stretches follow at residues 226-251 and 264-349; these read TTVL…SPSL and DAPE…CTEV. Positions 283 to 292 are enriched in polar residues; that stretch reads SMSSSPNTYA. Acidic residues predominate over residues 298 to 307; that stretch reads WSDDEGDGEA. Residues 308 to 317 show a composition bias toward basic and acidic residues; sequence VEPREQRLRL.

It is found in the cytoplasm. The protein localises to the cytosol. It localises to the nucleus. It carries out the reaction S-ubiquitinyl-[E2 ubiquitin-conjugating enzyme]-L-cysteine + [acceptor protein]-L-lysine = [E2 ubiquitin-conjugating enzyme]-L-cysteine + N(6)-ubiquitinyl-[acceptor protein]-L-lysine.. Its pathway is protein modification; protein ubiquitination. Its function is as follows. E3 ubiquitin-protein ligase that specifically binds poly-ADP-ribosylated proteins and mediates their ubiquitination and subsequent degradation. May regulate many important biological processes, such as cell survival and DNA damage response. Acts as an activator of the Wnt signaling pathway by mediating the ubiquitination of poly-ADP-ribosylated proteins. Neuroprotective protein. Protects against cell death induced by DNA damaging agents and rescues cells from G1 arrest. Promotes cell survival after gamma-irradiation. Facilitates DNA repair. This chain is E3 ubiquitin-protein ligase rnf146 (rnf146), found in Salmo salar (Atlantic salmon).